A 226-amino-acid polypeptide reads, in one-letter code: 7-cyano-7-deazaguanine synthase (226 aa).

10–20 (LSGGLDSATAA) contacts ATP. Zn(2+) contacts are provided by cysteine 191, cysteine 199, cysteine 202, and cysteine 205.

Belongs to the QueC family. Requires Zn(2+) as cofactor.

The enzyme catalyses 7-carboxy-7-deazaguanine + NH4(+) + ATP = 7-cyano-7-deazaguanine + ADP + phosphate + H2O + H(+). Its pathway is purine metabolism; 7-cyano-7-deazaguanine biosynthesis. Its function is as follows. Catalyzes the ATP-dependent conversion of 7-carboxy-7-deazaguanine (CDG) to 7-cyano-7-deazaguanine (preQ(0)). The protein is 7-cyano-7-deazaguanine synthase of Synechococcus sp. (strain CC9311).